The following is a 335-amino-acid chain: Probable magnesium transporter NIPA1 (335 aa).

Residues 1–7 lie on the Extracellular side of the membrane; the sequence is MDQMSPD. A helical membrane pass occupies residues 8 to 28; the sequence is NINGVILAVSSSIFIGSSFII. Residues 29-55 are Cytoplasmic-facing; sequence KKKGLKKAGASGVRAGEGGYGYLKEPW. Residues 56 to 76 form a helical membrane-spanning segment; sequence WWAGMITMIVGEVANFAAYAF. Residues 77-79 are Extracellular-facing; that stretch reads APA. Residues 80–100 form a helical membrane-spanning segment; the sequence is ILVTPLGALSIIFSAVLAHFI. Residues 101-104 are Cytoplasmic-facing; the sequence is LKEK. Residues 105-125 traverse the membrane as a helical segment; the sequence is LHMFGILGCILCVVGSTTIVL. Over 126-143 the chain is Extracellular; the sequence is HAPHEQKIESVKQIWQLA. Residues 144–164 form a helical membrane-spanning segment; it reads IEPGFLVYSAVIVIVVAILIF. Over 165–179 the chain is Cytoplasmic; sequence YYEPRYGKTHMIVYV. Residues 180 to 200 form a helical membrane-spanning segment; sequence GICSLMGSLTVMSVKAVAIAI. Residues 201-212 lie on the Extracellular side of the membrane; that stretch reads KLTFSGTNQFKY. The helical transmembrane segment at 213–233 threads the bilayer; the sequence is FNTWIFILVVATCCILQINYL. Residues 234-244 are Cytoplasmic-facing; that stretch reads NKALDTFNTAV. Residues 245–265 traverse the membrane as a helical segment; it reads ISPVYYVMFTTFTIIASMIMF. Topologically, residues 266-272 are extracellular; the sequence is KDWASQS. The chain crosses the membrane as a helical span at residues 273-293; the sequence is GLKIATELCGFVTILSGTFLL. Residues 294–335 lie on the Cytoplasmic side of the membrane; it reads HKTKDMGNSASGRGSISMPTRDTPVFTNSGSGRSSSSDKVAS. The span at 303–321 shows a compositional bias: polar residues; it reads ASGRGSISMPTRDTPVFTN. The tract at residues 303-335 is disordered; sequence ASGRGSISMPTRDTPVFTNSGSGRSSSSDKVAS. Residues 322–335 show a composition bias toward low complexity; the sequence is SGSGRSSSSDKVAS.

This sequence belongs to the NIPA (TC 2.A.7) family. As to quaternary structure, homodimer.

The protein localises to the cell membrane. It is found in the early endosome. Its function is as follows. Acts as a Mg(2+) transporter. Can also transport other divalent cations such as Fe(2+), Sr(2+), Ba(2+), Mn(2+) and Co(2+) but to a much less extent than Mg(2+). This Arabidopsis thaliana (Mouse-ear cress) protein is Probable magnesium transporter NIPA1.